The primary structure comprises 176 residues: Protein KleF (176 aa).

In Escherichia coli, this protein is Protein KleF (kleF).